A 103-amino-acid polypeptide reads, in one-letter code: Matrix Gla protein (103 aa).

Residues 1–19 (MKSLVLLAILAALAVVTLC) form the signal peptide. Glu21 carries the 4-carboxyglutamate modification. Ser22, Ser25, and Ser28 each carry phosphoserine. Residues 51–97 (RAKVQERIRERSKPVHELNREACDDYRLCERYAMVYGYNAAYNRYFR) enclose the Gla domain. A 4-carboxyglutamate mark is found at Glu56, Glu60, Glu67, and Glu71. Cys73 and Cys79 are oxidised to a cystine. The propeptide at 97–103 (RERRGAK) is removed in mature form; probably by carboxypeptidase N.

It belongs to the osteocalcin/matrix Gla protein family. In terms of processing, requires vitamin K-dependent gamma-carboxylation for its function.

The protein resides in the secreted. Its function is as follows. Associates with the organic matrix of bone and cartilage. Thought to act as an inhibitor of bone formation. The chain is Matrix Gla protein (MGP) from Pongo abelii (Sumatran orangutan).